Consider the following 98-residue polypeptide: DNA-binding protein Fis (98 aa).

Residues 74-93 constitute a DNA-binding region (H-T-H motif); it reads QTRAATMLGINRGTLRKKLK.

The protein belongs to the transcriptional regulatory Fis family. As to quaternary structure, homodimer.

Functionally, activates ribosomal RNA transcription. Plays a direct role in upstream activation of rRNA promoters. The chain is DNA-binding protein Fis from Histophilus somni (strain 2336) (Haemophilus somnus).